A 503-amino-acid polypeptide reads, in one-letter code: Maturase K (503 aa).

This sequence belongs to the intron maturase 2 family. MatK subfamily.

Its subcellular location is the plastid. The protein resides in the chloroplast. Functionally, usually encoded in the trnK tRNA gene intron. Probably assists in splicing its own and other chloroplast group II introns. The polypeptide is Maturase K (Backhousia myrtifolia (Grey myrtle)).